The following is a 62-amino-acid chain: Temporin-HN1 (62 aa).

An N-terminal signal peptide occupies residues methionine 1–serine 22. Positions glutamate 23 to glutamate 44 are excised as a propeptide. At leucine 60 the chain carries Leucine amide.

In terms of tissue distribution, expressed by the skin glands.

The protein resides in the secreted. Has antimicrobial activity against some Gram-positive bacteria and fungi but has no activity against a range of Gram-negative bacteria except P.faecalis. Active against the Gram-positive bacteria S.aureus ATCC 25923 (MIC=37.5 uM), S.carnosus KHS (MIC=37.5 uM), B.licheniformis X39 (MIC=19 uM), R.rhodochrous X15 (MIC=4.8 uM), is virtually inactive against E.faecalis 981 (MIC=150 uM) and inactive against E.faecium 091299. Has some antimicrobial activity against the Gram-negative bacterium P.faecalis X29 (MIC=75 uM) and is inactive against E.coli, P.aeruginosa and S.typhi. Has antifungal activity against C.albicans ATCC 2002 (MIC=19 uM) and lower activity against the slime mold 090223 (MIC=75 uM). Has low hemolytic activity against human erythrocytes (LC(50)=75 uM). This is Temporin-HN1 from Odorrana hainanensis (Odor frog).